Reading from the N-terminus, the 590-residue chain is G protein-coupled receptor kinase 5 (590 aa).

The segment at 1-185 is N-terminal; that stretch reads MELENIVANT…LERQPVTKNT (185 aa). Positions 20–39 are interaction with calmodulin; it reads GGKRKGKSKKWKEILKFPHI. In terms of domain architecture, RGS spans 53 to 171; it reads YCSLCDKQPV…LDSMYFDRFL (119 aa). The 263-residue stretch at 186–448 folds into the Protein kinase domain; that stretch reads FRQYRVLGKG…AAEVKRHPFF (263 aa). Residues 192–200 and Lys-215 contribute to the ATP site; that span reads LGKGGFGEV. Residue Asp-311 is the Proton acceptor of the active site. Positions 388–395 match the Nuclear localization signal motif; that stretch reads RKEKVKRE. The AGC-kinase C-terminal domain maps to 449–514; the sequence is RNMNFKRLEA…GSVPIPWQSE (66 aa). A Phosphoserine; by autocatalysis modification is found at Ser-484. Residue Thr-485 is modified to Phosphothreonine; by autocatalysis. The segment at 546 to 565 is sufficient for membrane localization; it reads PKKGLLQRLFKRQHQNNSKS. Positions 554–590 are disordered; it reads LFKRQHQNNSKSSPNSKTSFNHHINSNHVSSNSTGSS. Residues 561–590 are compositionally biased toward low complexity; sequence NNSKSSPNSKTSFNHHINSNHVSSNSTGSS. Ser-579 carries the phosphoserine modification.

It belongs to the protein kinase superfamily. AGC Ser/Thr protein kinase family. GPRK subfamily. In terms of assembly, interacts with ST13 (via the C-terminus 303-319 AA). Interacts with TP53/p53. Interacts with HTR4 (via C-terminus 330-346 AA); this interaction is promoted by 5-HT (serotonin). Interacts with HDAC5. Interacts with GIT1. In terms of processing, autophosphorylated. Autophosphorylation may play a critical role in the regulation of GRK5 kinase activity. Highest levels in lung, heart, retina, lingual epithelium. Very little in brain, liver, kidney.

It localises to the cytoplasm. Its subcellular location is the nucleus. It is found in the cell membrane. It catalyses the reaction [G-protein-coupled receptor] + ATP = [G-protein-coupled receptor]-phosphate + ADP + H(+). Its activity is regulated as follows. Inhibited by calmodulin with an IC(50) of 50 nM. Calmodulin inhibits GRK5 association with receptor and phospholipid. In terms of biological role, serine/threonine kinase that phosphorylates preferentially the activated forms of a variety of G-protein-coupled receptors (GPCRs). Such receptor phosphorylation initiates beta-arrestin-mediated receptor desensitization, internalization, and signaling events leading to their down-regulation. Phosphorylates a variety of GPCRs, including adrenergic receptors (Beta-2 adrenergic receptor), muscarinic acetylcholine receptors (more specifically Gi-coupled M2/M4 subtypes), dopamine receptors and opioid receptors. In addition to GPCRs, also phosphorylates various substrates: Hsc70-interacting protein/ST13, TP53/p53, HDAC5, and arrestin-1/ARRB1. Phosphorylation of ARRB1 by GRK5 inhibits G-protein independent MAPK1/MAPK3 signaling downstream of 5HT4-receptors. Phosphorylation of HDAC5, a repressor of myocyte enhancer factor 2 (MEF2) leading to nuclear export of HDAC5 and allowing MEF2-mediated transcription. Phosphorylation of TP53/p53, a crucial tumor suppressor, inhibits TP53/p53-mediated apoptosis. Phosphorylation of ST13 regulates internalization of the chemokine receptor. Phosphorylates rhodopsin (RHO) (in vitro) and a non G-protein-coupled receptor, LRP6 during Wnt signaling (in vitro). The sequence is that of G protein-coupled receptor kinase 5 (GRK5) from Bos taurus (Bovine).